We begin with the raw amino-acid sequence, 314 residues long: Zinc transporter ZIP3 (314 aa).

Residues 1–3 (MNL) are Extracellular-facing. Residues 4 to 24 (IFAKVLCLLAILVLMMLGSLI) form a helical membrane-spanning segment. Over 25–41 (PVKISEADFDKSSRSRK) the chain is Cytoplasmic. A helical transmembrane segment spans residues 42-62 (ILSLSNSFAGGVFLATCFNAL). The Extracellular portion of the chain corresponds to 63-84 (LPAVREKFFDLLKIGNISTDYP). A helical transmembrane segment spans residues 85–105 (LAETIMMVGFFLTVFVEQTVM). The Cytoplasmic portion of the chain corresponds to 106–169 (TFRKEKPSFI…KELSSSSPIR (64 aa)). Residues 170–190 (LFSLVFALSAHSVFEGLALGL) form a helical membrane-spanning segment. At 191-196 (QEDGNK) the chain is on the extracellular side. Residues 197 to 217 (LLSLFIGVVIHETLVAMALGV) form a helical membrane-spanning segment. At 218-229 (SMAKVNTHLKDA) the chain is on the cytoplasmic side. A helical transmembrane segment spans residues 230-250 (IKMAVLVSTMIPIGIVVGMAI). Residues 251–262 (QSAQNMASSIAS) lie on the Extracellular side of the membrane. A helical transmembrane segment spans residues 263–283 (ALLQGIAGGTFIFVTFFEILV). Over 284-292 (KELEEKNDR) the chain is Cytoplasmic. A helical membrane pass occupies residues 293 to 313 (LLKVLFLVLGYTVLAVLVLFK). W314 is a topological domain (extracellular).

It belongs to the ZIP transporter (TC 2.A.5) family.

The protein resides in the cell membrane. Its subcellular location is the apical cell membrane. The enzyme catalyses Zn(2+)(in) = Zn(2+)(out). In terms of biological role, transporter for the divalent cation Zn(2+). Mediates the influx of Zn(2+) into cells from extracellular space. This Xenopus tropicalis (Western clawed frog) protein is Zinc transporter ZIP3 (slc39a3).